The sequence spans 208 residues: uncharacterized protein (208 aa).

One can recognise a J domain in the interval 4-71 (DYYAILNITP…SRRAQYDRES (68 aa)). A disordered region spans residues 67-100 (YDRESASSSAKPRQSFFSRTNPQPQSQSQQGGPS). The segment covering 72–87 (ASSSAKPRQSFFSRTN) has biased composition (polar residues). Over residues 88 to 100 (PQPQSQSQQGGPS) the composition is skewed to low complexity. Residues 127–147 (GIANAFWTIVGTLAGAALGFI) form a helical membrane-spanning segment.

Belongs to the DnaJ family.

It is found in the endoplasmic reticulum membrane. This is an uncharacterized protein from Schizosaccharomyces pombe (strain 972 / ATCC 24843) (Fission yeast).